The sequence spans 393 residues: NADH-quinone oxidoreductase subunit D (393 aa).

Belongs to the complex I 49 kDa subunit family. NDH-1 is composed of 14 different subunits. Subunits NuoB, C, D, E, F, and G constitute the peripheral sector of the complex.

It is found in the cell inner membrane. The enzyme catalyses a quinone + NADH + 5 H(+)(in) = a quinol + NAD(+) + 4 H(+)(out). Its function is as follows. NDH-1 shuttles electrons from NADH, via FMN and iron-sulfur (Fe-S) centers, to quinones in the respiratory chain. The immediate electron acceptor for the enzyme in this species is believed to be ubiquinone. Couples the redox reaction to proton translocation (for every two electrons transferred, four hydrogen ions are translocated across the cytoplasmic membrane), and thus conserves the redox energy in a proton gradient. This chain is NADH-quinone oxidoreductase subunit D, found in Ehrlichia ruminantium (strain Welgevonden).